We begin with the raw amino-acid sequence, 182 residues long: Photosystem I assembly protein Ycf4 (182 aa).

2 helical membrane passes run 22-42 and 63-83; these read WSSV…SSYL and VMCF…LTIF.

This sequence belongs to the Ycf4 family.

Its subcellular location is the plastid. It is found in the chloroplast thylakoid membrane. Its function is as follows. Seems to be required for the assembly of the photosystem I complex. The chain is Photosystem I assembly protein Ycf4 from Oltmannsiellopsis viridis (Marine flagellate).